The sequence spans 1095 residues: Inactive phospholipase C-like protein 1 (1095 aa).

The span at 1 to 11 (MAEGAAGREDP) shows a compositional bias: basic and acidic residues. The segment at 1–61 (MAEGAAGRED…PGAAGTPADS (61 aa)) is disordered. 2 positions are modified to phosphoserine: serine 47 and serine 77. Residues 83-222 (SNQKCGGRKK…IWVSGLRYLV (140 aa)) form an interaction with PPP1C region. Residue threonine 93 is modified to Phosphothreonine; by PKA. Serine 95 is modified (phosphoserine). Positions 113–223 (SFMQAGCELK…WVSGLRYLVS (111 aa)) constitute a PH domain. The PI-PLC X-box domain occupies 398–542 (QDMTQPLSHY…LKRMIIVKGK (145 aa)). Positions 543 to 567 (KLPSDPDVLEGEVTDEDEEAEMSRR) are interaction with GABA A beta subunit. Threonine 556 bears the Phosphothreonine mark. The residue at position 569 (serine 569) is a Phosphoserine. In terms of domain architecture, PI-PLC Y-box spans 585–701 (LSDLVSICKS…GYVLRPSIMR (117 aa)). Residues 701–830 (RDEVSYFSAN…PGYRHVPLRS (130 aa)) form the C2 domain. Coiled-coil stretches lie at residues 894-914 (LREA…IKEL) and 1034-1059 (LKGQ…QLAC). The segment at 1066-1095 (KAPSSSAEAKSKRSLEAIEEKESSEENGKL) is disordered. Residues 1074-1095 (AKSKRSLEAIEEKESSEENGKL) are compositionally biased toward basic and acidic residues. Serine 1079 carries the post-translational modification Phosphoserine.

Interacts with PPP2CA. Interacts with Ins(1,4,5)P3, Ins(1,4,5,6)P4, GABARAP, GABA receptor beta subunits, GABA receptor gamma-2 subunits and PPP1C. May form a ternary complex with GABA receptor beta subunit and GABARAP. The formation of a ternary complex with GABA receptor beta subunit and GABARAP could be the key step for facilitating the association of GABARAP with the GABA receptor gamma-2 subunit and to allow it to be transported at the right destination. In terms of processing, phosphorylated by the catalytic subunit of PKA. Phosphorylation of Thr-93 resulted in dissociation of PPP1C from PRIP1. In terms of tissue distribution, expressed in a variety of fetal and adult organs including brain, lung and kidney. Its expression was greatly reduced in small and non-small cell lung carcinoma. Isoform 1 is predominantly expressed in brain.

It localises to the cytoplasm. Its function is as follows. Involved in an inositol phospholipid-based intracellular signaling cascade. Shows no PLC activity to phosphatidylinositol 4,5-bisphosphate and phosphatidylinositol. Component in the phospho-dependent endocytosis process of GABA A receptor. Regulates the turnover of receptors and thus contributes to the maintenance of GABA-mediated synaptic inhibition. Its aberrant expression could contribute to the genesis and progression of lung carcinoma. Acts as an inhibitor of PPP1C. This is Inactive phospholipase C-like protein 1 (PLCL1) from Homo sapiens (Human).